Consider the following 403-residue polypeptide: MSGSDGGLEEEPELSITLTLRMLMHGKEVGSIIGKKGETVKRIREQSSARITISEGSCPERITTITGSTAAVFHAVSMIAFKLDEDLCAAPANGGNVSRPPVTLRLVIPASQCGSLIGKAGTKIKEIRETTGAQVQVAGDLLPNSTERAVTVSGVPDAIILCVRQICAVILESPPKGATIPYHPSLSLGTVLLSANQGFSVQGQYGAVTPAEVTKLQQLSSHAVPFATPSVVPGLDPGTQTSSQEFLVPNDLIGCVIGRQGSKISEIRQMSGAHIKIGNQAEGAGERHVTITGSPVSIALAQYLITACLETAKSTSGGTPSSAPADLPAPFSPPLTALPTAPPGLLGTPYAISLSNFIGLKPMPFLALPPASPGPPPGLAAYTAKMAAANGSKKAERQKFSPY.

KH domains lie at 17-67 (TLTL…TITG), 101-154 (PVTL…TVSG), and 241-293 (TSSQ…TITG).

Its subcellular location is the cytoplasm. Single-stranded nucleic acid binding protein that binds preferentially to oligo dC. This is Poly(rC)-binding protein 4 (PCBP4) from Homo sapiens (Human).